Consider the following 253-residue polypeptide: MSFCVLIPARLASTRLPRKVLLDVGGIPMIEQVRRRALESGAAQVVVAADHPEVVDCIRSYGGEALLTAAEHVCGTERLAEAARLLGLADDAIIVNLQGDEPGMTPALLHATAQLLLDHPQRQMATAAVPITHWDELADPHAVKLVLDAEGCARYFSRAPIPWDRSHFPLSSGQTLPQTPGIWWRHLGLYAYRNAFLQDYAAWSASPLEVIESLEQMRALERGVQIAVYCAAEAPAAGVDTAADLDRVRDLFP.

The protein belongs to the KdsB family.

It localises to the cytoplasm. The enzyme catalyses 3-deoxy-alpha-D-manno-oct-2-ulosonate + CTP = CMP-3-deoxy-beta-D-manno-octulosonate + diphosphate. It participates in nucleotide-sugar biosynthesis; CMP-3-deoxy-D-manno-octulosonate biosynthesis; CMP-3-deoxy-D-manno-octulosonate from 3-deoxy-D-manno-octulosonate and CTP: step 1/1. It functions in the pathway bacterial outer membrane biogenesis; lipopolysaccharide biosynthesis. Its function is as follows. Activates KDO (a required 8-carbon sugar) for incorporation into bacterial lipopolysaccharide in Gram-negative bacteria. The polypeptide is 3-deoxy-manno-octulosonate cytidylyltransferase (Acidithiobacillus ferrooxidans (strain ATCC 23270 / DSM 14882 / CIP 104768 / NCIMB 8455) (Ferrobacillus ferrooxidans (strain ATCC 23270))).